Reading from the N-terminus, the 372-residue chain is Glutamate 5-kinase (372 aa).

Lys-14 provides a ligand contact to ATP. Ser-54, Asp-141, and Asn-153 together coordinate substrate. Residue 173–174 (TD) participates in ATP binding. A PUA domain is found at 280–358 (RGTLVLDDGA…DAIEALLGYV (79 aa)).

This sequence belongs to the glutamate 5-kinase family.

It is found in the cytoplasm. The catalysed reaction is L-glutamate + ATP = L-glutamyl 5-phosphate + ADP. It participates in amino-acid biosynthesis; L-proline biosynthesis; L-glutamate 5-semialdehyde from L-glutamate: step 1/2. In terms of biological role, catalyzes the transfer of a phosphate group to glutamate to form L-glutamate 5-phosphate. The chain is Glutamate 5-kinase from Pseudomonas aeruginosa (strain UCBPP-PA14).